The primary structure comprises 147 residues: MVHFTAEEKAAITGLWGKVNVEEAGGEALGRLLVVYPWTQRFFDSFGNLSSASAIMGNPKVKAHGKKVLTSFGEAIKNLDNLKGAFAKLSELHCDKLHVDPENFRLLGNVIVIILATHFGREFTPDVQAAWQKLVSGVATALAHKYH.

The Globin domain occupies 3–147 (HFTAEEKAAI…VATALAHKYH (145 aa)). Heme b contacts are provided by His-64 and His-93.

This sequence belongs to the globin family. Heterotetramer of two epsilon chains and two alpha chains. Red blood cells.

Beta-type chain found in early embryos. The protein is Hemoglobin subunit epsilon-1 (HBE1) of Capra hircus (Goat).